The following is a 698-amino-acid chain: Serotransferrin (698 aa).

A signal peptide spans 1-19 (MRFAVGALLACAALGLCLA). 2 Transferrin-like domains span residues 25–347 (VKWC…NQRE) and 360–683 (VKWC…NIRK). 2 disulfides stabilise this stretch: cysteine 28-cysteine 67 and cysteine 38-cysteine 58. Arginine 42 is modified (dimethylated arginine). Aspartate 82 and tyrosine 114 together coordinate Fe(3+). Disulfide bonds link cysteine 137-cysteine 213, cysteine 156-cysteine 350, cysteine 177-cysteine 193, cysteine 180-cysteine 196, cysteine 190-cysteine 198, cysteine 246-cysteine 260, cysteine 363-cysteine 395, and cysteine 373-cysteine 386. Positions 139, 143, 145, and 146 each coordinate hydrogencarbonate. Residue tyrosine 207 coordinates Fe(3+). Histidine 268 contacts Fe(3+). Serine 388 carries the phosphoserine modification. Fe(3+) contacts are provided by aspartate 410 and tyrosine 447. 8 disulfides stabilise this stretch: cysteine 420–cysteine 693, cysteine 435–cysteine 656, cysteine 471–cysteine 542, cysteine 495–cysteine 684, cysteine 505–cysteine 519, cysteine 516–cysteine 525, cysteine 582–cysteine 596, and cysteine 634–cysteine 639. The hydrogencarbonate site is built by threonine 473, arginine 477, alanine 479, and glycine 480. N-linked (GlcNAc...) asparagine glycosylation occurs at asparagine 512. Fe(3+) is bound at residue tyrosine 536. Residue histidine 604 participates in Fe(3+) binding. At serine 685 the chain carries Phosphoserine.

This sequence belongs to the transferrin family. As to quaternary structure, monomer. Part of a complex composed of SLC40A1/ferroportin, TF/transferrin and HEPH/hephaestin that transfers iron from cells to transferrin. As to expression, expressed by the liver and secreted in plasma.

It localises to the secreted. Its function is as follows. Transferrins are iron binding transport proteins which can bind two Fe(3+) ions in association with the binding of an anion, usually bicarbonate. It is responsible for the transport of iron from sites of absorption and heme degradation to those of storage and utilization. Serum transferrin may also have a further role in stimulating cell proliferation. This Rattus norvegicus (Rat) protein is Serotransferrin (Tf).